We begin with the raw amino-acid sequence, 506 residues long: Probable malate:quinone oxidoreductase (506 aa).

It belongs to the MQO family. FAD serves as cofactor.

The catalysed reaction is (S)-malate + a quinone = a quinol + oxaloacetate. It participates in carbohydrate metabolism; tricarboxylic acid cycle; oxaloacetate from (S)-malate (quinone route): step 1/1. This Rhodococcus jostii (strain RHA1) protein is Probable malate:quinone oxidoreductase.